The following is a 190-amino-acid chain: Translation initiation factor IF-3 (190 aa).

The disordered stretch occupies residues 159 to 190; that stretch reads QSEVQQKPKREGRNMIMFLSPRKSPLIKKDNE.

The protein belongs to the IF-3 family. As to quaternary structure, monomer.

Its subcellular location is the cytoplasm. Its function is as follows. IF-3 binds to the 30S ribosomal subunit and shifts the equilibrium between 70S ribosomes and their 50S and 30S subunits in favor of the free subunits, thus enhancing the availability of 30S subunits on which protein synthesis initiation begins. The polypeptide is Translation initiation factor IF-3 (Prochlorococcus marinus (strain MIT 9215)).